The chain runs to 223 residues: AMSH-like ubiquitin thioesterase 2 (223 aa).

Residues 49-177 enclose the MPN domain; the sequence is VHISERLLED…YGIFKLTDPG (129 aa). His-127, His-129, Asp-140, His-142, Cys-185, His-191, and His-193 together coordinate Zn(2+). The short motif at 127–140 is the JAMM motif element; it reads HTHPSQGCFMSSVD.

It belongs to the peptidase M67C family. Requires Zn(2+) as cofactor.

Its function is as follows. Zinc metalloprotease that cleaves 'Lys-48'- and 'Lys-63'-linked polyubiquitin chains. The protein is AMSH-like ubiquitin thioesterase 2 (AMSH2) of Arabidopsis thaliana (Mouse-ear cress).